Reading from the N-terminus, the 77-residue chain is ATP synthase subunit c (77 aa).

A run of 2 helical transmembrane segments spans residues 13-33 (IATV…GIVA) and 55-75 (FLGI…YFIF).

Belongs to the ATPase C chain family. F-type ATPases have 2 components, F(1) - the catalytic core - and F(0) - the membrane proton channel. F(1) has five subunits: alpha(3), beta(3), gamma(1), delta(1), epsilon(1). F(0) has three main subunits: a(1), b(2) and c(10-14). The alpha and beta chains form an alternating ring which encloses part of the gamma chain. F(1) is attached to F(0) by a central stalk formed by the gamma and epsilon chains, while a peripheral stalk is formed by the delta and b chains.

It localises to the cell membrane. Its function is as follows. F(1)F(0) ATP synthase produces ATP from ADP in the presence of a proton or sodium gradient. F-type ATPases consist of two structural domains, F(1) containing the extramembraneous catalytic core and F(0) containing the membrane proton channel, linked together by a central stalk and a peripheral stalk. During catalysis, ATP synthesis in the catalytic domain of F(1) is coupled via a rotary mechanism of the central stalk subunits to proton translocation. Key component of the F(0) channel; it plays a direct role in translocation across the membrane. A homomeric c-ring of between 10-14 subunits forms the central stalk rotor element with the F(1) delta and epsilon subunits. This chain is ATP synthase subunit c, found in Clavibacter sepedonicus (Clavibacter michiganensis subsp. sepedonicus).